Consider the following 301-residue polypeptide: Putative hydro-lyase C5H10.01 (301 aa).

Belongs to the D-glutamate cyclase family.

In Schizosaccharomyces pombe (strain 972 / ATCC 24843) (Fission yeast), this protein is Putative hydro-lyase C5H10.01.